Reading from the N-terminus, the 875-residue chain is Serine/threonine-protein kinase D2 (875 aa).

A disordered region spans residues 1–33 (MAAAPSHPAGLPCSPGPGSPPPPGGSDLQSLPP). A compositionally biased stretch (pro residues) spans 14 to 24 (SPGPGSPPPPG). Phosphoserine occurs at positions 26 and 30. Tyrosine 87 is modified (phosphotyrosine). Residues 138-188 (PHALTVHSYRAPAFCDHCGEMLFGLVRQGLKCDGCGLNYHKRCAFSIPNNC) form a Phorbol-ester/DAG-type 1 zinc finger. A phosphoserine mark is found at serine 197, serine 198, serine 200, serine 203, serine 206, serine 211, serine 212, and serine 214. The interval 224–247 (RSTTDLLPRRPPSSSSSSSSSSFY) is disordered. Over residues 236 to 245 (SSSSSSSSSS) the composition is skewed to low complexity. Serine 244 is subject to Phosphoserine; by CSNK1D and CSNK1E. Serine 245 bears the Phosphoserine mark. A Phorbol-ester/DAG-type 2 zinc finger spans residues 265-315 (PHTFLIHSYTRPTVCQACKKLLKGLFRQGLQCKDCKFNCHKRCATRVPNDC). The 113-residue stretch at 398–510 (TTLREGWVVH…WETAIRQALM (113 aa)) folds into the PH domain. The residue at position 408 (tyrosine 408) is a Phosphotyrosine. The residue at position 439 (tyrosine 439) is a Phosphotyrosine; by ABL1. At serine 519 the chain carries Phosphoserine. The region spanning 552-808 (IFPDEVLGSG…VDKSLSHPWL (257 aa)) is the Protein kinase domain. ATP is bound by residues 558–566 (LGSGQFGVV) and lysine 581. Aspartate 675 serves as the catalytic Proton acceptor. Serine 707 bears the Phosphoserine; by PKC mark. Serine 711 is modified (phosphoserine). Phosphotyrosine; by ABL1 is present on tyrosine 718. The Important for ABL1-mediated Tyr-718 phosphorylation motif lies at 725–727 (LNQ). Residue serine 873 is modified to Phosphoserine; by autocatalysis.

Belongs to the protein kinase superfamily. CAMK Ser/Thr protein kinase family. PKD subfamily. In terms of assembly, interacts (via C-terminus) with LCK. Interacts (via N-terminus and zing-finger domain 1 and 2) with PRKCD in response to oxidative stress; the interaction is independent of PRKD2 tyrosine phosphorylation. The cofactor is Mg(2+). Phosphorylation of Ser-873 correlates with the activation status of the kinase. Ser-707 is probably phosphorylated by PKC. Phosphorylation at Ser-244 by CSNK1D and CSNK1E promotes nuclear localization and substrate targeting. Phosphorylation at Ser-244, Ser-707 and Ser-711 is required for nuclear localization. Phosphorylated at Tyr-438 by ABL1 in response to oxidative stress. Phosphorylated at Tyr-718 by ABL1 specifically in response to oxidative stress; requires prior phosphorylation at Ser-707 or/and Ser-711.

The protein localises to the cytoplasm. It localises to the cell membrane. It is found in the golgi apparatus. Its subcellular location is the trans-Golgi network. It carries out the reaction L-seryl-[protein] + ATP = O-phospho-L-seryl-[protein] + ADP + H(+). The enzyme catalyses L-threonyl-[protein] + ATP = O-phospho-L-threonyl-[protein] + ADP + H(+). Its activity is regulated as follows. Activated by DAG and phorbol esters. Phorbol-ester/DAG-type domains bind DAG, mediating translocation to membranes. Autophosphorylation of Ser-711 and phosphorylation of Ser-707 by PKC relieves auto-inhibition by the PH domain. Catalytic activity is further increased by phosphorylation at Tyr-718 in response to oxidative stress. Its function is as follows. Serine/threonine-protein kinase that converts transient diacylglycerol (DAG) signals into prolonged physiological effects downstream of PKC, and is involved in the regulation of cell proliferation via MAPK1/3 (ERK1/2) signaling, oxidative stress-induced NF-kappa-B activation, inhibition of HDAC7 transcriptional repression, signaling downstream of T-cell antigen receptor (TCR) and cytokine production, and plays a role in Golgi membrane trafficking, angiogenesis, secretory granule release and cell adhesion. May potentiate mitogenesis induced by the neuropeptide bombesin by mediating an increase in the duration of MAPK1/3 (ERK1/2) signaling, which leads to accumulation of immediate-early gene products including FOS that stimulate cell cycle progression. In response to oxidative stress, is phosphorylated at Tyr-438 and Tyr-718 by ABL1, which leads to the activation of PRKD2 without increasing its catalytic activity, and mediates activation of NF-kappa-B. In response to the activation of the gastrin receptor CCKBR, is phosphorylated at Ser-244 by CSNK1D and CSNK1E, translocates to the nucleus, phosphorylates HDAC7, leading to nuclear export of HDAC7 and inhibition of HDAC7 transcriptional repression of NR4A1/NUR77. Upon TCR stimulation, is activated independently of ZAP70, translocates from the cytoplasm to the nucleus and is required for interleukin-2 (IL2) promoter up-regulation. During adaptive immune responses, is required in peripheral T-lymphocytes for the production of the effector cytokines IL2 and IFNG after TCR engagement and for optimal induction of antibody responses to antigens. In epithelial cells stimulated with lysophosphatidic acid (LPA), is activated through a PKC-dependent pathway and mediates LPA-stimulated interleukin-8 (IL8) secretion via a NF-kappa-B-dependent pathway. During TCR-induced T-cell activation, interacts with and is activated by the tyrosine kinase LCK, which results in the activation of the NFAT transcription factors. In the trans-Golgi network (TGN), regulates the fission of transport vesicles that are on their way to the plasma membrane and in polarized cells is involved in the transport of proteins from the TGN to the basolateral membrane. Plays an important role in endothelial cell proliferation and migration prior to angiogenesis, partly through modulation of the expression of KDR/VEGFR2 and FGFR1, two key growth factor receptors involved in angiogenesis. In secretory pathway, is required for the release of chromogranin-A (CHGA)-containing secretory granules from the TGN. Downstream of PRKCA, plays important roles in angiotensin-2-induced monocyte adhesion to endothelial cells. This is Serine/threonine-protein kinase D2 (Prkd2) from Rattus norvegicus (Rat).